A 578-amino-acid chain; its full sequence is Probable arginine--tRNA ligase, mitochondrial (578 aa).

A mitochondrion-targeting transit peptide spans 1-16 (MACGFRRAIACQLSRV). Residues 133 to 135 (SPN), His144, Tyr322, Asp326, and Gln350 each bind L-arginine. The 'HIGH' region signature appears at 133–144 (SPNVAKKFHVGH). Lys568 is subject to N6-acetyllysine.

The protein belongs to the class-I aminoacyl-tRNA synthetase family.

The protein resides in the mitochondrion membrane. The enzyme catalyses tRNA(Arg) + L-arginine + ATP = L-arginyl-tRNA(Arg) + AMP + diphosphate. In terms of biological role, catalyzes the attachment of arginine to tRNA(Arg) in a two-step reaction: arginine is first activated by ATP to form Arg-AMP and then transferred to the acceptor end of tRNA(Arg). This Pongo abelii (Sumatran orangutan) protein is Probable arginine--tRNA ligase, mitochondrial (RARS2).